Here is a 260-residue protein sequence, read N- to C-terminus: DNA repair protein RecO (260 aa).

The tract at residues 239 to 260 is disordered; that stretch reads SAGVAAARKAGGDGSDGDEGEQ.

The protein belongs to the RecO family.

Its function is as follows. Involved in DNA repair and RecF pathway recombination. This is DNA repair protein RecO from Sodalis glossinidius (strain morsitans).